We begin with the raw amino-acid sequence, 123 residues long: MSITKDQILEAFAAMSVMEVVELIEAMEEKFGVSAAAAVVAGGAADAGAAAEEKTEFDVVLTSHGDNKVGVIKAIRGATGLGLKEAKAMAEAAPVAVKEAVSKEEAEALKKELEEAGAQVEIK.

Belongs to the bacterial ribosomal protein bL12 family. As to quaternary structure, homodimer. Part of the ribosomal stalk of the 50S ribosomal subunit. Forms a multimeric L10(L12)X complex, where L10 forms an elongated spine to which 2 to 4 L12 dimers bind in a sequential fashion. Binds GTP-bound translation factors.

Functionally, forms part of the ribosomal stalk which helps the ribosome interact with GTP-bound translation factors. Is thus essential for accurate translation. This Shewanella amazonensis (strain ATCC BAA-1098 / SB2B) protein is Large ribosomal subunit protein bL12.